The primary structure comprises 134 residues: Small ribosomal subunit protein uS8 (134 aa).

Belongs to the universal ribosomal protein uS8 family. As to quaternary structure, part of the 30S ribosomal subunit. Contacts proteins S5 and S12.

In terms of biological role, one of the primary rRNA binding proteins, it binds directly to 16S rRNA central domain where it helps coordinate assembly of the platform of the 30S subunit. This chain is Small ribosomal subunit protein uS8, found in Nitratiruptor sp. (strain SB155-2).